Here is a 490-residue protein sequence, read N- to C-terminus: MSQSVSERTRIKSDRYESGVIPYAKMGYWDAAYAVKNTDVLALFRITPQPGVDPVEAAAAVAGESSTATWTVVWTDLLTACDRYRAKAYRVDPVPNTTDQYFAFIAYECDLFEEGSLANLTASIIGNVFGFKAVSALRLEDMRIPHSYLKTFQGPATGVIVERERLNKYGIPLLGATVKPKLGLSGKNYGRVVYEGLKGGLDFLKDDENINSQPFMRWRERFLYCMEGINRASAATGETKGSYLNITAGTMEEVYKRAEYAKTVGSIVVMIDLVMGYTAIQSAAIWARDNDLILHLHRAGNSTYARQKNHGINFRVICKWMRMCGVDHIHAGTVVGKLEGDPLMIKGFYDTLLLTHLNVNLPYGIFFEMTWASLRKCMPVASGGIHCGQMHQLVHYLGDDVVLQFGGGTIGHPDGIQAGATANRVALEAMILARNEGADYFNSDIGPQILRNAAKTCGPLQTALDLWKDISFNYTSTDTSDFSVTPTANV.

Positions 127 and 177 each coordinate substrate. Lys179 acts as the Proton acceptor in catalysis. Lys181 contributes to the substrate binding site. Residues Lys205, Asp207, and Glu208 each contribute to the Mg(2+) site. Lys205 is modified (N6-carboxylysine). The Proton acceptor role is filled by His297. Substrate-binding residues include Arg298, His330, and Ser382.

Belongs to the RuBisCO large chain family. Type I subfamily. As to quaternary structure, heterohexadecamer of 8 large chains and 8 small chains. Mg(2+) is required as a cofactor.

It localises to the plastid. The protein localises to the chloroplast. It carries out the reaction 2 (2R)-3-phosphoglycerate + 2 H(+) = D-ribulose 1,5-bisphosphate + CO2 + H2O. It catalyses the reaction D-ribulose 1,5-bisphosphate + O2 = 2-phosphoglycolate + (2R)-3-phosphoglycerate + 2 H(+). RuBisCO catalyzes two reactions: the carboxylation of D-ribulose 1,5-bisphosphate, the primary event in carbon dioxide fixation, as well as the oxidative fragmentation of the pentose substrate in the photorespiration process. Both reactions occur simultaneously and in competition at the same active site. In Phaeodactylum tricornutum (strain CCAP 1055/1), this protein is Ribulose bisphosphate carboxylase large chain.